A 376-amino-acid polypeptide reads, in one-letter code: Serine/threonine-protein kinase-transforming protein mos (376 aa).

Residues 94 to 376 (VCLMHRLGSG…KALADSIEPM (283 aa)) form the Protein kinase domain. ATP is bound by residues 100-108 (LGSGGFGSV) and lysine 121. Aspartate 229 functions as the Proton acceptor in the catalytic mechanism.

The protein belongs to the protein kinase superfamily. Ser/Thr protein kinase family.

The enzyme catalyses L-seryl-[protein] + ATP = O-phospho-L-seryl-[protein] + ADP + H(+). The catalysed reaction is L-threonyl-[protein] + ATP = O-phospho-L-threonyl-[protein] + ADP + H(+). In Moloney murine sarcoma virus (strain m1) (MoMSV), this protein is Serine/threonine-protein kinase-transforming protein mos (V-MOS).